Reading from the N-terminus, the 98-residue chain is Complement inhibitor RaCI1 (98 aa).

The N-terminal stretch at 1 to 20 (MNAMLVLFIASALFISEHNT) is a signal peptide. Cystine bridges form between Cys33-Cys57, Cys38-Cys59, and Cys53-Cys74. Residues 79 to 98 (TTKPPMAPGDNKDNKEEESN) are disordered. Residues 88–98 (DNKDNKEEESN) show a composition bias toward basic and acidic residues.

The protein belongs to the RaCI family. In terms of tissue distribution, expressed in salivary glands.

The protein resides in the secreted. Complement inhibitor. Prevents complement-mediated C5 activation by binding to C5. Binds C5 at a different binding site than the other tick complement inhibitors OmCI and CirpT1, and the drug eculizumab. Inhibits the complement in human and guinea pig but not in other species tested (rabbit, rat, mouse, and pig). The polypeptide is Complement inhibitor RaCI1 (Rhipicephalus appendiculatus (Brown ear tick)).